Consider the following 146-residue polypeptide: uncharacterized protein (146 aa).

The segment covering 86 to 96 has biased composition (acidic residues); sequence EFDSPMDEEEE. A disordered region spans residues 86 to 124; sequence EFDSPMDEEEETKPREASLDQTAPKKSKKEELLVKNNNF.

This is an uncharacterized protein from Ostreid herpesvirus 1 (isolate France) (OsHV-1).